Consider the following 415-residue polypeptide: Nacrein-like protein C2 (415 aa).

Asn27 carries N-linked (GlcNAc...) asparagine glycosylation. Residues 33–414 enclose the Alpha-carbonic anhydrase domain; it reads AGFSYDRSIC…KNKVTVYKSF (382 aa). Zn(2+) is bound by residues His132, His134, and His157. Positions 201–297 are disordered; sequence DEPDDEECKH…GENGHKHGCR (97 aa). Residues 207–219 show a composition bias toward basic and acidic residues; the sequence is ECKHILKGHHPDN. A compositionally biased stretch (low complexity) spans 220–289; it reads NENGNGDNGN…NNGENGNNGE (70 aa). 22 tandem repeats follow at residues 225–227, 228–230, 231–233, 234–236, 237–239, 240–242, 243–245, 246–248, 249–251, 252–254, 255–257, 258–260, 261–263, 264–266, 267–269, 270–272, 273–275, 276–278, 279–281, 282–284, 285–286, and 288–290. Residues 225 to 290 are 27 X 3 AA approximate tandem repeats of G-X-N; it reads GDNGNNGYNG…NGENGNNGEN (66 aa). 355 to 356 is a substrate binding site; the sequence is TT.

It belongs to the alpha-carbonic anhydrase family. As to quaternary structure, homooligomer; disulfide-linked. May also be disulfide-linked to insoluble organic matrix. Requires Zn(2+) as cofactor. In terms of tissue distribution, expressed in the mantle.

It localises to the secreted. The protein localises to the extracellular space. The protein resides in the extracellular matrix. It carries out the reaction hydrogencarbonate + H(+) = CO2 + H2O. Functionally, acts as a negative regulator for calcification in the shells of mollusks. May function both as a calcium concentrator and as a carbonic anhydrase required for production of carbonate ions, which are assembled to CaCO(3) at mineralization sites. Is important for shell formation in both the calcitic prismatic layer and the aragonitic nacreous layer. Shows inhibitory activity of crystal formation when present in free state but, when attached to the insoluble matrix, may regulate the form and size of aragonite crystal. The protein is Nacrein-like protein C2 of Crassostrea nippona (Iwagaki oyster).